The chain runs to 193 residues: Segregation and condensation protein B (193 aa).

It belongs to the ScpB family. In terms of assembly, homodimer. Homodimerization may be required to stabilize the binding of ScpA to the Smc head domains. Component of a cohesin-like complex composed of ScpA, ScpB and the Smc homodimer, in which ScpA and ScpB bind to the head domain of Smc. The presence of the three proteins is required for the association of the complex with DNA.

It localises to the cytoplasm. Participates in chromosomal partition during cell division. May act via the formation of a condensin-like complex containing Smc and ScpA that pull DNA away from mid-cell into both cell halves. The polypeptide is Segregation and condensation protein B (Clostridium botulinum (strain ATCC 19397 / Type A)).